We begin with the raw amino-acid sequence, 357 residues long: Probable dual-specificity RNA methyltransferase RlmN (357 aa).

Glu95 functions as the Proton acceptor in the catalytic mechanism. The 235-residue stretch at 106–340 (NRDRHTVCVS…VSVREEKGTD (235 aa)) folds into the Radical SAM core domain. An intrachain disulfide couples Cys113 to Cys345. The [4Fe-4S] cluster site is built by Cys120, Cys124, and Cys127. S-adenosyl-L-methionine-binding positions include 172–173 (GE), Ser204, 227–229 (SLH), and Asn302. The active-site S-methylcysteine intermediate is the Cys345.

The protein belongs to the radical SAM superfamily. RlmN family. It depends on [4Fe-4S] cluster as a cofactor.

Its subcellular location is the cytoplasm. It catalyses the reaction adenosine(2503) in 23S rRNA + 2 reduced [2Fe-2S]-[ferredoxin] + 2 S-adenosyl-L-methionine = 2-methyladenosine(2503) in 23S rRNA + 5'-deoxyadenosine + L-methionine + 2 oxidized [2Fe-2S]-[ferredoxin] + S-adenosyl-L-homocysteine. The catalysed reaction is adenosine(37) in tRNA + 2 reduced [2Fe-2S]-[ferredoxin] + 2 S-adenosyl-L-methionine = 2-methyladenosine(37) in tRNA + 5'-deoxyadenosine + L-methionine + 2 oxidized [2Fe-2S]-[ferredoxin] + S-adenosyl-L-homocysteine. In terms of biological role, specifically methylates position 2 of adenine 2503 in 23S rRNA and position 2 of adenine 37 in tRNAs. This Desulfitobacterium hafniense (strain Y51) protein is Probable dual-specificity RNA methyltransferase RlmN.